A 161-amino-acid polypeptide reads, in one-letter code: Multiprotein-bridging factor 1 (161 aa).

Positions 1-66 (MADDWDTVTK…RSEAGSGQFL (66 aa)) are disordered. The segment covering 14 to 23 (RVGGGGGGGP) has biased composition (gly residues). 2 stretches are compositionally biased toward polar residues: residues 27–36 (TIKNKSQLNA) and 52–65 (TANSSRSEAGSGQF). One can recognise an HTH cro/C1-type domain in the interval 90 to 144 (MQNREQKKLGNRLEFGKKVGINEKDLARIEKGEVPITQDQVNRIERGLEMFIRGV). Positions 101-120 (RLEFGKKVGINEKDLARIEK) form a DNA-binding region, H-T-H motif.

Belongs to the MBF1 family.

In terms of biological role, transcriptional coactivator that stimulates GCN4-dependent transcriptional activity by bridging the DNA-binding region of GCN4 and TBP (SPT15), thereby recruiting TBP to GCN4-bound promoters. Involved in induction of the ribosome quality control (RQC) pathway; a pathway that degrades nascent peptide chains during problematic translation. Required to prevent stalled ribosomes from frameshifting. The sequence is that of Multiprotein-bridging factor 1 (MBF1) from Pyricularia oryzae (strain 70-15 / ATCC MYA-4617 / FGSC 8958) (Rice blast fungus).